A 203-amino-acid chain; its full sequence is Cardiotrophin-1 (203 aa).

It belongs to the IL-6 superfamily. In terms of tissue distribution, expressed in the ventricle and atrium of adult rats. Also detected in the lung, kidney, liver, skeletal muscle, stomach and urinary bladder. Not detected in brain, colon, testis, spleen or thymus. Overexpressed in the ventricles in the case of hypertension and hypertrophy.

It localises to the secreted. Its function is as follows. Induces cardiac myocyte hypertrophy in vitro. Binds to and activates the ILST/gp130 receptor. This chain is Cardiotrophin-1 (Ctf1), found in Rattus norvegicus (Rat).